The primary structure comprises 208 residues: Probable Brix domain-containing ribosomal biogenesis protein (208 aa).

Residues M1–W196 form the Brix domain.

Probably involved in the biogenesis of the ribosome. This chain is Probable Brix domain-containing ribosomal biogenesis protein, found in Thermococcus kodakarensis (strain ATCC BAA-918 / JCM 12380 / KOD1) (Pyrococcus kodakaraensis (strain KOD1)).